We begin with the raw amino-acid sequence, 196 residues long: Beta-crystallin A4 (196 aa).

Position 2 is an N-acetylthreonine (Thr-2). The interval Thr-2–His-11 is N-terminal arm. 2 Beta/gamma crystallin 'Greek key' domains span residues Trp-12 to Ser-51 and Gly-52 to Ala-98. The interval Cys-99 to Asp-104 is connecting peptide. Beta/gamma crystallin 'Greek key' domains are found at residues Ser-105–Ser-146 and Gly-147–Gln-195.

In terms of assembly, homo/heterodimer, or complexes of higher-order. The structure of beta-crystallin oligomers seems to be stabilized through interactions between the N-terminal arms.

Crystallins are the dominant structural components of the vertebrate eye lens. This chain is Beta-crystallin A4 (Cryba4), found in Rattus norvegicus (Rat).